We begin with the raw amino-acid sequence, 189 residues long: GTPase NRas (189 aa).

GTP-binding positions include 10–18 (GAGGVGKSA) and 29–30 (VD). An Effector region motif is present at residues 32-40 (YDPTIEDSY). 57-61 (DTAGQ) serves as a coordination point for GTP. A Phosphoserine modification is found at serine 89. 116-119 (NKCD) is a binding site for GTP. The hypervariable region stretch occupies residues 166-185 (YRLKKLNSSDDGTQGCMGSP). Lysine 170 participates in a covalent cross-link: Glycyl lysine isopeptide (Lys-Gly) (interchain with G-Cter in ubiquitin). A lipid anchor (S-palmitoyl cysteine) is attached at cysteine 181. A lipid anchor (S-farnesyl cysteine) is attached at cysteine 186. The propeptide at 187-189 (VLM) is removed in mature form.

Belongs to the small GTPase superfamily. Ras family. Interacts (active GTP-bound form preferentially) with RGS14. Interacts (active GTP-bound form) with RASSF7. Interacts (active GTP-bound form) with both SHOC2 and PP1c (all isoforms) to form a tertiary complex; SHOC2 and PP1c preferably bind M-Ras/MRAS, but they also bind K-Ras/KRAS, N-Ras/NRAS and H-Ras/HRAS. Palmitoylated by the ZDHHC9-GOLGA7 complex. Depalmitoylated by ABHD17A, ABHD17B and ABHD17C. A continuous cycle of de- and re-palmitoylation regulates rapid exchange between plasma membrane and Golgi. In terms of processing, acetylation at Lys-104 prevents interaction with guanine nucleotide exchange factors (GEFs). Post-translationally, ubiquitinated by the BCR(LZTR1) E3 ubiquitin ligase complex at Lys-170 in a non-degradative manner, leading to inhibit Ras signaling by decreasing Ras association with membranes. Phosphorylation at Ser-89 enhances NRAS association with its downstream effectors.

The protein resides in the cell membrane. The protein localises to the golgi apparatus membrane. It carries out the reaction GTP + H2O = GDP + phosphate + H(+). Alternates between an inactive form bound to GDP and an active form bound to GTP. Activated by a guanine nucleotide-exchange factor (GEF) and inactivated by a GTPase-activating protein (GAP). Its function is as follows. Ras proteins bind GDP/GTP and possess intrinsic GTPase activity. This Mus musculus (Mouse) protein is GTPase NRas (Nras).